Here is a 57-residue protein sequence, read N- to C-terminus: MKPAVDEMFPEGAGPYVDLDEAGGSSGLLMDLAANEKAVHSDFFNDFEDLFDDDDIQ.

The protein belongs to the CSN9 family. Component of the CSN complex, probably composed of cops1, cops2, cops3, cops4, cops5, cops6, cops7, cops8 and cops9.

It is found in the nucleus. The protein localises to the cytoplasm. It localises to the nucleoplasm. Component of the COP9 signalosome complex (CSN), a complex involved in various cellular and developmental processes. The CSN complex is an essential regulator of the ubiquitin (Ubl) conjugation pathway by mediating the deneddylation of the cullin subunits of SCF-type E3 ligase complexes, leading to decrease the Ubl ligase activity. May play a role in cell proliferation. In Danio rerio (Zebrafish), this protein is COP9 signalosome complex subunit 9.